The following is a 1222-amino-acid chain: A disintegrin and metalloproteinase with thrombospondin motifs 16 (1222 aa).

Residues 1-20 form the signal peptide; sequence MESRGCAALWVLLLAQVSEQ. A propeptide spanning residues 21 to 277 is cleaved from the precursor; the sequence is QTPACALGLA…EYKPSSRHKR (257 aa). Residues Asn-154 and Asn-190 are each glycosylated (N-linked (GlcNAc...) asparagine). A Cysteine switch motif is present at residues 245-253; that stretch reads HFCGRRKKY. Residue Cys-247 participates in Zn(2+) binding. One can recognise a Peptidase M12B domain in the interval 288-493; that stretch reads LNVETLVVVD…AQAICLADQP (206 aa). Asn-308 carries N-linked (GlcNAc...) asparagine glycosylation. 11 disulfide bridges follow: Cys-364–Cys-415, Cys-390–Cys-397, Cys-409–Cys-488, Cys-448–Cys-472, Cys-516–Cys-541, Cys-527–Cys-548, Cys-536–Cys-567, Cys-561–Cys-572, Cys-596–Cys-633, Cys-600–Cys-638, and Cys-611–Cys-623. Zn(2+) is bound at residue His-431. Glu-432 is a catalytic residue. Residues His-435 and His-441 each coordinate Zn(2+). One can recognise a Disintegrin domain in the interval 494–583; that stretch reads KPVKEYKYPE…KYGDEGPKPT (90 aa). In terms of domain architecture, TSP type-1 1 spans 584 to 639; the sequence is HGHWSDWSPWSPCSRTCGGGISHRDRLCTNPRPSHGGKFCQGSTRTLKLCNSQRCP. N-linked (GlcNAc...) asparagine glycans are attached at residues Asn-739, Asn-778, Asn-825, Asn-833, Asn-903, and Asn-933. The spacer stretch occupies residues 745-871; that stretch reads THRGLYSKHH…KTPAAQPSYS (127 aa). TSP type-1 domains follow at residues 872-920, 925-985, 986-1046, 1049-1113, and 1125-1179; these read WAIV…LVPC, CPSS…QSCP, PAWS…KRCH, KKLQ…IPCP, and RGSW…HFCP. The region spanning 1184–1221 is the PLAC domain; the sequence is RGTFCKDLFHWCYLVPQHGMCGHRFYSKQCCNTCSKSN.

Requires Zn(2+) as cofactor. Post-translationally, the precursor is cleaved by a furin endopeptidase. Glycosylated. Can be O-fucosylated by POFUT2 on a serine or a threonine residue found within the consensus sequence C1-X(2)-(S/T)-C2-G of the TSP type-1 repeat domains where C1 and C2 are the first and second cysteine residue of the repeat, respectively. Fucosylated repeats can then be further glycosylated by the addition of a beta-1,3-glucose residue by the glucosyltransferase, B3GALTL. Fucosylation mediates the efficient secretion of ADAMTS family members. Can also be C-glycosylated with one or two mannose molecules on tryptophan residues within the consensus sequence W-X-X-W of the TPRs, and N-glycosylated. These other glycosylations can also facilitate secretion.

The protein localises to the secreted. It localises to the extracellular space. It is found in the extracellular matrix. The protein is A disintegrin and metalloproteinase with thrombospondin motifs 16 (Adamts16) of Mus musculus (Mouse).